The primary structure comprises 154 residues: Protein LOL1 (154 aa).

Putative zinc finger regions lie at residues 34–64, 73–103, and 111–141; these read QLVC…VTAV, QLVC…VNLA, and HVNC…VTSV.

The protein localises to the nucleus. Its function is as follows. Positive regulator of reactive oxygen-induced cell death. May be involved in the repression of the copper/zinc superoxide dismutase CSD1 and CSD2 that detoxify accumulating superoxide before the reactive oxygen species (ROS) can trigger a cell death cascade. LSD1 and LOL1 have antagonistic effects on CSD1 and CSD2 accumulation to regulate oxidative stress-induced cell death. The protein is Protein LOL1 (LOL1) of Arabidopsis thaliana (Mouse-ear cress).